We begin with the raw amino-acid sequence, 266 residues long: Protein crossbronx-like (266 aa).

Residues 15-178 (KQGYKILAEY…IQELAISSRR (164 aa)) enclose the UBC core domain. The tract at residues 216–266 (EATCEDDSPPAELLGHIDSSRQLDEDEANQRGKLQAATTDLQHGARCSVAQ) is disordered.

Belongs to the ubiquitin-conjugating enzyme family. FTS subfamily.

The chain is Protein crossbronx-like from Drosophila ananassae (Fruit fly).